A 314-amino-acid polypeptide reads, in one-letter code: MPEAVVLINSASDANSIEQTALPVPMALVHRTRVQDAFPVSWIPKGGDRFSVTAVLPHDHPFFAPVHGDRHDPLLIAETLRQAAMLVFHAGYGVPVGYHFLMATLDYTCHLDHLGVSGEVAELEVEVACSQLKFRGGQPVQGQVDWAVRRAGRLAATGTATTRFTSPQVYRRMRGDFATPTASVPGTAPVPAARAGRTRDEDVVLSASSQQDTWRLRVDTSHPTLFQRPNDHVPGMLLLEAARQAACLVTGPAPFVPSIGGTRFVRYAEFDSPCWIQATVRPGPAAGLTTVRVTGHQDGSLVFLTTLSGPAFSG.

This sequence belongs to the AfsA family.

The catalysed reaction is a medium-chain 3-oxoacyl-[ACP] + dihydroxyacetone phosphate = a (4-alkanoyl-5-oxo-2,5-dihydrofuran-3-yl)methyl phosphate + holo-[ACP] + H2O. Involved of the biosynthesis of S.coelicolor butanolide 1 (SCB1), a gamma-butyrolactone that triggers antibiotic production. The protein is 2-oxo-3-(phosphooxy)propyl 3-oxoalkanoate synthase of Streptomyces coelicolor (strain ATCC BAA-471 / A3(2) / M145).